A 389-amino-acid chain; its full sequence is Succinate--CoA ligase [ADP-forming] subunit beta (389 aa).

Residues 9-244 (KKLFADYGLP…LTQEDPREAE (236 aa)) enclose the ATP-grasp domain. Residues Lys46, 53–55 (GRG), Glu99, Ala102, and Glu107 each bind ATP. Mg(2+)-binding residues include Asn199 and Asp213. Substrate is bound by residues Asn264 and 321–323 (GIV).

The protein belongs to the succinate/malate CoA ligase beta subunit family. As to quaternary structure, heterotetramer of two alpha and two beta subunits. Mg(2+) serves as cofactor.

It catalyses the reaction succinate + ATP + CoA = succinyl-CoA + ADP + phosphate. The enzyme catalyses GTP + succinate + CoA = succinyl-CoA + GDP + phosphate. It functions in the pathway carbohydrate metabolism; tricarboxylic acid cycle; succinate from succinyl-CoA (ligase route): step 1/1. Succinyl-CoA synthetase functions in the citric acid cycle (TCA), coupling the hydrolysis of succinyl-CoA to the synthesis of either ATP or GTP and thus represents the only step of substrate-level phosphorylation in the TCA. The beta subunit provides nucleotide specificity of the enzyme and binds the substrate succinate, while the binding sites for coenzyme A and phosphate are found in the alpha subunit. The chain is Succinate--CoA ligase [ADP-forming] subunit beta from Histophilus somni (strain 2336) (Haemophilus somnus).